We begin with the raw amino-acid sequence, 479 residues long: Ribosomal RNA small subunit methyltransferase F (479 aa).

S-adenosyl-L-methionine-binding positions include 125 to 131, glutamate 149, aspartate 176, and aspartate 194; that span reads AAAPGSK. Cysteine 247 functions as the Nucleophile in the catalytic mechanism.

The protein belongs to the class I-like SAM-binding methyltransferase superfamily. RsmB/NOP family.

The protein localises to the cytoplasm. It carries out the reaction cytidine(1407) in 16S rRNA + S-adenosyl-L-methionine = 5-methylcytidine(1407) in 16S rRNA + S-adenosyl-L-homocysteine + H(+). Functionally, specifically methylates the cytosine at position 1407 (m5C1407) of 16S rRNA. This Salmonella schwarzengrund (strain CVM19633) protein is Ribosomal RNA small subunit methyltransferase F.